Consider the following 245-residue polypeptide: 5-oxoprolinase subunit A (245 aa).

Belongs to the LamB/PxpA family. Forms a complex composed of PxpA, PxpB and PxpC.

It catalyses the reaction 5-oxo-L-proline + ATP + 2 H2O = L-glutamate + ADP + phosphate + H(+). Catalyzes the cleavage of 5-oxoproline to form L-glutamate coupled to the hydrolysis of ATP to ADP and inorganic phosphate. This chain is 5-oxoprolinase subunit A, found in Serratia proteamaculans (strain 568).